The chain runs to 694 residues: Nucleolin (694 aa).

The tract at residues 1–277 is disordered; it reads MVKLAKTPKN…EAKKKKTETP (277 aa). A compositionally biased stretch (acidic residues) spans 26–40; that stretch reads ESEEEESSDLEESSG. Low complexity predominate over residues 46–108; sequence PPKKQQKAAV…AVVGKGAKNG (63 aa). Repeat copies occupy residues 55–61, 62–68, 69–75, 76–82, and 84–90. Residues 55–90 form a 5 X 7 AA tandem repeats of X-T-P-X-K-K-X region; the sequence is VTPAKKAATPAKKAATPAKKAVTPAKKAVATPAKKA. 2 positions are modified to phosphoserine: Ser-116 and Ser-136. The span at 116–142 shows a compositional bias: acidic residues; that stretch reads SEEEDEDDEDDEEDEDEEEESDEEEEP. Positions 143 to 168 are enriched in low complexity; sequence AVPVKPAAKKSAAAVPAKKPAVVPAK. The residue at position 171 (Ser-171) is a Phosphoserine. Acidic residues predominate over residues 171-194; that stretch reads SEEEEEEDDEEEDEEDDESEDEAM. Over residues 196–213 the composition is skewed to low complexity; that stretch reads TTPAPVKKPTPAKATPAK. The span at 218–246 shows a compositional bias: acidic residues; the sequence is SEDEEDEEDEDEDEEDEDDEEEDEEESED. 4 RRM domains span residues 281–357, 371–445, 461–535, and 553–628; these read FSLF…KAKS, RTLF…YTGE, KTLI…FSSP, and KTLF…FAKP. The disordered stretch occupies residues 631–694; sequence EFQRGGGFGG…KPQGKKIKFE (64 aa). Residues 633–680 show a composition bias toward gly residues; that stretch reads QRGGGFGGGFGGRGGRGGRGGGRGGFGGRGGGRGFGGRGGGFRGGRGG. Residues 681 to 694 show a composition bias toward basic and acidic residues; that stretch reads GGDHKPQGKKIKFE.

Highly phosphorylated during mitosis.

It localises to the nucleus. The protein localises to the nucleolus. Its function is as follows. Nucleolin is the major nucleolar protein of growing eukaryotic cells. It is found associated with intranucleolar chromatin and pre-ribosomal particles. It induces chromatin decondensation by binding to histone H1. It is thought to play a role in pre-rRNA transcription and ribosome assembly. This Gallus gallus (Chicken) protein is Nucleolin (NCL).